The following is a 364-amino-acid chain: Peroxisomal membrane protein PEX16 (364 aa).

The residue at position 200 (serine 200) is a Phosphoserine.

This sequence belongs to the peroxin-16 family.

It localises to the peroxisome membrane. Involved in the biogenesis of peroxisomes. The polypeptide is Peroxisomal membrane protein PEX16 (pex16) (Schizosaccharomyces pombe (strain 972 / ATCC 24843) (Fission yeast)).